A 1078-amino-acid polypeptide reads, in one-letter code: Exportin-1 (1078 aa).

Positions 34–100 (AQQVLTQFQA…RNYIVAVMIK (67 aa)) constitute an Importin N-terminal domain.

This sequence belongs to the exportin family. As to quaternary structure, interacts with php4.

It localises to the nucleus. Its function is as follows. Receptor for the leucine-rich nuclear export signal (NES). This Schizosaccharomyces pombe (strain 972 / ATCC 24843) (Fission yeast) protein is Exportin-1 (xpo1).